A 198-amino-acid chain; its full sequence is Pre-histone-like nucleoprotein (198 aa).

Serine 2 bears the N-acetylserine; by host mark. The propeptide occupies 2-24 (SILISPSNNTGWGLRFPSKMFGG). The tract at residues 24–55 (GAKKRSDQHPVRVRGHYRAPWGAHKRGRTGRT) is disordered. Residues lysine 27 and lysine 48 each carry the N6-acetyllysine; by host modification. Over residues 34-52 (VRVRGHYRAPWGAHKRGRT) the composition is skewed to basic residues. 2 positions are modified to phosphothreonine; by host: threonine 55 and threonine 74. Phosphoserine; by host occurs at positions 183 and 185. The Nuclear localization signal motif lies at 188–198 (RVPVRTRPPRN).

The protein belongs to the adenoviridae histone-like nucleoprotein family. Interacts with the core-capsid bridging protein; this interaction bridges the virus core to the capsid. Interacts with host NPM1; this interaction might play a role in placing the pre-histone-like nucleoprotein on the viral DNA or regulating viral gene expression. Interacts with host HMGB1; this interaction inhibits host immune response. In terms of processing, cleaved near the N-terminus by the viral protease during virion maturation to form the mature protein.

Its subcellular location is the virion. The protein localises to the host nucleus. The protein resides in the host nucleolus. Plays a role in the inhibition of host immune response within the nucleus. Interacts with cellular nucleosomes and immobilizes the host immune danger signal HMGB1 on chromatin. In turn, prevents HMGB1 release out of the cell and thus decreases inflammation. Also plays a role in the wrapping and condensation of the viral DNA. May also promote viral genome import into the nucleus. This is Pre-histone-like nucleoprotein from Human adenovirus C serotype 2 (HAdV-2).